The chain runs to 112 residues: Iron-sulfur cluster assembly protein CyaY (112 aa).

Belongs to the frataxin family.

Its function is as follows. Involved in iron-sulfur (Fe-S) cluster assembly. May act as a regulator of Fe-S biogenesis. The protein is Iron-sulfur cluster assembly protein CyaY of Herminiimonas arsenicoxydans.